Reading from the N-terminus, the 52-residue chain is Rubredoxin-2 (52 aa).

The Rubredoxin-like domain maps to 1 to 52; sequence MEQWKCNICGYIYNPETGDPEGDIPAGTSFESLPDSWMCPVCGAGKEEFTKI. Residues C6, C9, C39, and C42 each coordinate Fe cation.

This sequence belongs to the rubredoxin family. Monomer. Fe(3+) is required as a cofactor.

Serves as an electron acceptor for pyruvate ferredoxin oxidoreductase (PFOR). The polypeptide is Rubredoxin-2 (rub2) (Chlorobaculum tepidum (strain ATCC 49652 / DSM 12025 / NBRC 103806 / TLS) (Chlorobium tepidum)).